Reading from the N-terminus, the 291-residue chain is Nucleotide-binding protein CMM_1747 (291 aa).

15–22 is a binding site for ATP; that stretch reads GMSGAGRS. 66–69 serves as a coordination point for GTP; the sequence is DVRG.

This sequence belongs to the RapZ-like family.

In terms of biological role, displays ATPase and GTPase activities. The protein is Nucleotide-binding protein CMM_1747 of Clavibacter michiganensis subsp. michiganensis (strain NCPPB 382).